Reading from the N-terminus, the 59-residue chain is Large ribosomal subunit protein uL30 (59 aa).

Belongs to the universal ribosomal protein uL30 family. Part of the 50S ribosomal subunit.

In Aeromonas hydrophila subsp. hydrophila (strain ATCC 7966 / DSM 30187 / BCRC 13018 / CCUG 14551 / JCM 1027 / KCTC 2358 / NCIMB 9240 / NCTC 8049), this protein is Large ribosomal subunit protein uL30.